The primary structure comprises 477 residues: Aspartyl/glutamyl-tRNA(Asn/Gln) amidotransferase subunit B (477 aa).

Belongs to the GatB/GatE family. GatB subfamily. As to quaternary structure, heterotrimer of A, B and C subunits.

It catalyses the reaction L-glutamyl-tRNA(Gln) + L-glutamine + ATP + H2O = L-glutaminyl-tRNA(Gln) + L-glutamate + ADP + phosphate + H(+). It carries out the reaction L-aspartyl-tRNA(Asn) + L-glutamine + ATP + H2O = L-asparaginyl-tRNA(Asn) + L-glutamate + ADP + phosphate + 2 H(+). Allows the formation of correctly charged Asn-tRNA(Asn) or Gln-tRNA(Gln) through the transamidation of misacylated Asp-tRNA(Asn) or Glu-tRNA(Gln) in organisms which lack either or both of asparaginyl-tRNA or glutaminyl-tRNA synthetases. The reaction takes place in the presence of glutamine and ATP through an activated phospho-Asp-tRNA(Asn) or phospho-Glu-tRNA(Gln). This Thioalkalivibrio sulfidiphilus (strain HL-EbGR7) protein is Aspartyl/glutamyl-tRNA(Asn/Gln) amidotransferase subunit B.